The chain runs to 326 residues: Transcription initiation factor IIB (326 aa).

A TFIIB-type zinc finger spans residues 26–57 (DVEVCPECGSPRLIRDYRRGEFICQDCGLVIE). Residues C30, C33, C49, and C52 each coordinate Zn(2+). 2 consecutive repeat copies span residues 143-226 (SELD…TREL) and 237-318 (DYIP…ELAE).

Belongs to the TFIIB family.

Functionally, stabilizes TBP binding to an archaeal box-A promoter. Also responsible for recruiting RNA polymerase II to the pre-initiation complex (DNA-TBP-TFIIB). The chain is Transcription initiation factor IIB from Archaeoglobus fulgidus (strain ATCC 49558 / DSM 4304 / JCM 9628 / NBRC 100126 / VC-16).